The following is a 470-amino-acid chain: Neuraminidase (470 aa).

Topologically, residues 1-14 are intravirion; it reads MNPNQKIITIGSIS. The tract at residues 11 to 32 is involved in apical transport and lipid raft association; sequence GSISLGLVVFNVLLHVVSIIVT. The chain crosses the membrane as a helical span at residues 15-35; that stretch reads LGLVVFNVLLHVVSIIVTVLV. The hypervariable stalk region stretch occupies residues 32–86; it reads TVLVLGRGGKNRICNETVVREYNETVRIEKVTQWHNTNVIEYVPYWNEGTYMNNT. Residues 36–470 lie on the Virion surface side of the membrane; sequence LGRGGKNRIC…AILPFDIDKM (435 aa). Residues Asn-46, Asn-54, and Asn-84 are each glycosylated (N-linked (GlcNAc...) asparagine; by host). The interval 89 to 470 is head of neuraminidase; sequence ICDVKGFAPF…AILPFDIDKM (382 aa). 8 cysteine pairs are disulfide-bonded: Cys-90/Cys-417, Cys-122/Cys-127, Cys-182/Cys-229, Cys-231/Cys-236, Cys-277/Cys-290, Cys-279/Cys-288, Cys-316/Cys-335, and Cys-421/Cys-446. Residue Arg-116 coordinates substrate. N-linked (GlcNAc...) asparagine; by host glycosylation is present at Asn-144. Asp-149 functions as the Proton donor/acceptor in the catalytic mechanism. Arg-150 contacts substrate. Substrate is bound at residue 275–276; the sequence is EE. Residue Arg-291 participates in substrate binding. Asp-292 lines the Ca(2+) pocket. N-linked (GlcNAc...) asparagine; by host glycosylation is present at Asn-293. 2 residues coordinate Ca(2+): Gly-296 and Asp-322. Residue Arg-368 coordinates substrate. A glycan (N-linked (GlcNAc...) asparagine; by host) is linked at Asn-398. Tyr-402 serves as the catalytic Nucleophile.

It belongs to the glycosyl hydrolase 34 family. Homotetramer. The cofactor is Ca(2+). In terms of processing, N-glycosylated.

The protein localises to the virion membrane. The protein resides in the host apical cell membrane. The catalysed reaction is Hydrolysis of alpha-(2-&gt;3)-, alpha-(2-&gt;6)-, alpha-(2-&gt;8)- glycosidic linkages of terminal sialic acid residues in oligosaccharides, glycoproteins, glycolipids, colominic acid and synthetic substrates.. Inhibited by the neuraminidase inhibitors zanamivir (Relenza) and oseltamivir (Tamiflu). These drugs interfere with the release of progeny virus from infected cells and are effective against all influenza strains. Resistance to neuraminidase inhibitors is quite rare. Its function is as follows. Catalyzes the removal of terminal sialic acid residues from viral and cellular glycoconjugates. Cleaves off the terminal sialic acids on the glycosylated HA during virus budding to facilitate virus release. Additionally helps virus spread through the circulation by further removing sialic acids from the cell surface. These cleavages prevent self-aggregation and ensure the efficient spread of the progeny virus from cell to cell. Otherwise, infection would be limited to one round of replication. Described as a receptor-destroying enzyme because it cleaves a terminal sialic acid from the cellular receptors. May facilitate viral invasion of the upper airways by cleaving the sialic acid moieties on the mucin of the airway epithelial cells. Likely to plays a role in the budding process through its association with lipid rafts during intracellular transport. May additionally display a raft-association independent effect on budding. Plays a role in the determination of host range restriction on replication and virulence. Sialidase activity in late endosome/lysosome traffic seems to enhance virus replication. The protein is Neuraminidase of Influenza A virus (strain A/Equine/Jillin/1/1989 H3N8).